The following is a 457-amino-acid chain: Gamma-aminobutyric acid receptor subunit gamma-4 (457 aa).

A signal peptide spans Met1–Cys21. At Glu22 to Gly256 the chain is on the extracellular side. Asn35 and Asn112 each carry an N-linked (GlcNAc...) asparagine glycan. The cysteines at positions 173 and 187 are disulfide-linked. The N-linked (GlcNAc...) asparagine glycan is linked to Asn230. The next 3 helical transmembrane spans lie at Tyr257–Ile279, Ser283–Ser305, and Ala317–Leu339. Residues Asn340 to Ser433 are Cytoplasmic-facing. Residues Tyr434 to Leu457 traverse the membrane as a helical segment.

Belongs to the ligand-gated ion channel (TC 1.A.9) family. Gamma-aminobutyric acid receptor (TC 1.A.9.5) subfamily. GABRG4 sub-subfamily. As to quaternary structure, generally pentameric. There are five types of GABA(A) receptor chains: alpha, beta, gamma, delta, and rho. Abundant in several brain regions, including the ectostriatum, nucleus rotundus and hyperstriatum ventrale.

The protein localises to the postsynaptic cell membrane. It is found in the cell membrane. Its function is as follows. GABA, the major inhibitory neurotransmitter in the vertebrate brain, mediates neuronal inhibition by binding to the GABA/benzodiazepine receptor and opening an integral chloride channel. The chain is Gamma-aminobutyric acid receptor subunit gamma-4 (GABRG4) from Gallus gallus (Chicken).